The following is a 142-amino-acid chain: Universal stress protein C (142 aa).

This sequence belongs to the universal stress protein A family.

The protein resides in the cytoplasm. In terms of biological role, required for resistance to DNA-damaging agents. The protein is Universal stress protein C (uspC) of Escherichia coli O157:H7.